The chain runs to 103 residues: Small ribosomal subunit protein uS10c (103 aa).

This sequence belongs to the universal ribosomal protein uS10 family. In terms of assembly, part of the 30S ribosomal subunit.

The protein localises to the plastid. It localises to the chloroplast. Its function is as follows. Involved in the binding of tRNA to the ribosomes. This Trieres chinensis (Marine centric diatom) protein is Small ribosomal subunit protein uS10c.